The following is a 482-amino-acid chain: uncharacterized protein (482 aa).

Positions 5 to 79 (IYYKFKSQKD…STSVIVRRVP (75 aa)) constitute a DWNN domain. The disordered stretch occupies residues 86–108 (GTAARYVSGAPKTTGARSDSVKR). The CCHC-type zinc finger occupies 183–200 (YICYRCGQKGHWIQACPT). The segment at 282 to 322 (CTLCKKLARNACRTPCCDKLFCEECIQTALLDSDFECPNCH) adopts an RING-type; degenerate zinc-finger fold. Disordered regions lie at residues 346 to 393 (KSVL…SSAV) and 447 to 482 (QVYH…TKTN). Positions 451-466 (NNRNPPRTNSRPSNAS) are enriched in low complexity.

The protein localises to the nucleus. This is an uncharacterized protein from Schizosaccharomyces pombe (strain 972 / ATCC 24843) (Fission yeast).